The sequence spans 211 residues: Large ribosomal subunit protein bL25 (211 aa).

The segment at 185–211 is disordered; that stretch reads ESTTPAATEGEETEAAAAAPEPAAEDK. A compositionally biased stretch (low complexity) spans 199-211; that stretch reads AAAAAPEPAAEDK.

It belongs to the bacterial ribosomal protein bL25 family. CTC subfamily. In terms of assembly, part of the 50S ribosomal subunit; part of the 5S rRNA/L5/L18/L25 subcomplex. Contacts the 5S rRNA. Binds to the 5S rRNA independently of L5 and L18.

This is one of the proteins that binds to the 5S RNA in the ribosome where it forms part of the central protuberance. The chain is Large ribosomal subunit protein bL25 from Treponema denticola (strain ATCC 35405 / DSM 14222 / CIP 103919 / JCM 8153 / KCTC 15104).